A 1269-amino-acid polypeptide reads, in one-letter code: Clustered mitochondria protein homolog (1269 aa).

The Clu domain occupies 297-552; that stretch reads PSNNGDFMRT…NTNPVDIEFV (256 aa). The span at 958–969 shows a compositional bias: basic and acidic residues; it reads EKKKEESKKAAA. The segment at 958 to 989 is disordered; the sequence is EKKKEESKKAAADGEDAGSSGATSKEEEQAKE. TPR repeat units follow at residues 1020–1053 and 1147–1180; these read VSSYLLLSNMYSRLGQYSQAVTFCNKAALLSERC and GQNESRIANLYTSLDDMSHALSHIEKAKSIFSKE. Positions 1211–1269 are disordered; that stretch reads LASAQQATKPANISQKKGKKSSSSSPALTNKSVDELLQFIEGPGASKSSKKSKKKHTKN. Residues 1213 to 1223 show a composition bias toward polar residues; sequence SAQQATKPANI. Residues 1258–1269 are compositionally biased toward basic residues; the sequence is SSKKSKKKHTKN.

Belongs to the CLU family. As to quaternary structure, may associate with the eukaryotic translation initiation factor 3 (eIF-3) complex.

The protein resides in the cytoplasm. Functionally, mRNA-binding protein involved in proper cytoplasmic distribution of mitochondria. The protein is Clustered mitochondria protein homolog of Kluyveromyces lactis (strain ATCC 8585 / CBS 2359 / DSM 70799 / NBRC 1267 / NRRL Y-1140 / WM37) (Yeast).